The primary structure comprises 465 residues: Hexokinase type 1 (465 aa).

One can recognise a Hexokinase domain in the interval 8–447 (EEDFPEVYKV…CGVGAAIMAG (440 aa)). The tract at residues 65-197 (TGRERGQFLA…EISVDVMGII (133 aa)) is hexokinase small subdomain. Lys-88 is an ATP binding site. Residues 139 to 165 (PLGIAFAFTLKKLALDVGILVSWTKEF) form a glucose-binding region. The segment at 198 to 436 (NVGAGSLLAL…YNFEFVITQD (239 aa)) is hexokinase large subdomain.

The protein belongs to the hexokinase family.

It catalyses the reaction a D-hexose + ATP = a D-hexose 6-phosphate + ADP + H(+). The catalysed reaction is D-mannose + ATP = D-mannose 6-phosphate + ADP + H(+). It carries out the reaction D-fructose + ATP = D-fructose 6-phosphate + ADP + H(+). The enzyme catalyses D-glucose + ATP = D-glucose 6-phosphate + ADP + H(+). It participates in carbohydrate metabolism; hexose metabolism. It functions in the pathway carbohydrate degradation; glycolysis; D-glyceraldehyde 3-phosphate and glycerone phosphate from D-glucose: step 1/4. Its function is as follows. Catalyzes the phosphorylation of various hexoses to hexose 6-phosphate. This is Hexokinase type 1 (Hex-t1) from Drosophila melanogaster (Fruit fly).